The sequence spans 672 residues: Threonine--tRNA ligase (672 aa).

Residues 1 to 64 (MTELLKISLP…EGDAELALIT (64 aa)) form the TGS domain. Residues 257 to 566 (DHRKLGREMD…LIEHFAGRLP (310 aa)) are catalytic. Zn(2+) is bound by residues Cys-362, His-413, and His-543.

It belongs to the class-II aminoacyl-tRNA synthetase family. As to quaternary structure, homodimer. Requires Zn(2+) as cofactor.

It localises to the cytoplasm. It carries out the reaction tRNA(Thr) + L-threonine + ATP = L-threonyl-tRNA(Thr) + AMP + diphosphate + H(+). In terms of biological role, catalyzes the attachment of threonine to tRNA(Thr) in a two-step reaction: L-threonine is first activated by ATP to form Thr-AMP and then transferred to the acceptor end of tRNA(Thr). Also edits incorrectly charged L-seryl-tRNA(Thr). In Erythrobacter litoralis (strain HTCC2594), this protein is Threonine--tRNA ligase.